The chain runs to 66 residues: Beta-defensin 107A (66 aa).

A signal peptide spans 1–22 (MKIFFFIFAALFLLAQIFQART). Cystine bridges form between Cys-37-Cys-51 and Cys-41-Cys-60.

This sequence belongs to the beta-defensin family.

Its subcellular location is the secreted. In terms of biological role, has antibacterial activity. The chain is Beta-defensin 107A (DEFB107A) from Gorilla gorilla gorilla (Western lowland gorilla).